A 142-amino-acid polypeptide reads, in one-letter code: Universal stress protein G (142 aa).

Belongs to the universal stress protein A family.

This is Universal stress protein G (uspG) from Escherichia coli O157:H7.